The primary structure comprises 790 residues: MAKKNTVTGSKIKRKRQDESPEVSESEEIDVQGLIDDEASEDSEDEVESEDQVFENSDADSDEELNNLIGEEEDVSDVDSEDFSDELQDDSNSITDKLTNVRIRTSSQSSNENVHGLFADGTERIIKPEIEPVYDSDDSDHENFNTIGNIPLSAYEEMPHIGYDINGKRIMRPAKGSALDQLLESIDLPEGWTGLLDQNTGSSLKLTDEELELIRKIQHNENTDDNINPYEPTIEWFTSKTEVMPLTAVPEPKRRFVPSKHEAKRIMKIVRAIRDGRIVPPEKRKEQQDEEQYNFDLWDDNTDEPNEHIMNLRAPKLPPPTNEESYNPPEEYLMTEEERKKWEETDPSERETNFIPQKYGSLRKVPAYQENLRERFERSLDLYLAPRVRHNKLNIDPDSLIPDLPSPKDLRPFPIKCSTIFQGHIGRVRTLSIDPSGLWLATGGDDGTVRVWEILTGRQVYHCDVVDKKKDDDNIDSLEWNPDASVGILAVAAGESVYLLVPTILGYEIENAGRSKIEVGWGYDTYGNKNKRGDLNVNGEEDNESGANEVKKEVTKWLTPMEGQSQQGIAAIIQCRKAVKNLSWHRKGDYFVTVSPDSGNTSVLIHQLSKHLSQSPFRKSKGIIVDAKFHPFKPQLFVASQRSIKIYDLSQQVLTKKLMPGARYLSGIDIHPRGDHLLASSYDKRVLWHDLDLSNTPYKTLRYHEKAVRNIKFHKGRLPLFASASDDGSVHVFHGTVYDDLMTNPLLVPLKKLTGHKVVHSLGVLDLVWHPKEAWLFTAGADGTARLWTT.

The segment at 1–93 (MAKKNTVTGS…SDELQDDSNS (93 aa)) is disordered. Residues 20–89 (SPEVSESEEI…SEDFSDELQD (70 aa)) are compositionally biased toward acidic residues. The interval 255–371 (RFVPSKHEAK…LRKVPAYQEN (117 aa)) is required for interaction with NOP7. Residues 371–407 (NLRERFERSLDLYLAPRVRHNKLNIDPDSLIPDLPSP) are required for interaction with YTM1. WD repeat units follow at residues 423-462 (GHIG…QVYH), 470-510 (KDDD…YEIE), 574-616 (QCRK…SQSP), 619-657 (KSKG…LTKK), 660-699 (PGAR…TPYK), 703-743 (YHEK…DLMT), and 759-790 (VHSL…LWTT).

Belongs to the WD repeat BOP1/ERB1 family. Component of the NOP7 complex, composed of ERB1, NOP7 and YTM1. The complex is held together by ERB1, which interacts with NOP7 via its N-terminal domain and with YTM1 via a high-affinity interaction between the seven-bladed beta-propeller domains of the 2 proteins. The NOP7 complex associates with the 66S pre-ribosome.

Its subcellular location is the nucleus. The protein resides in the nucleolus. The protein localises to the nucleoplasm. Its function is as follows. Component of the NOP7 complex, which is required for maturation of the 25S and 5.8S ribosomal RNAs and formation of the 60S ribosome. This Meyerozyma guilliermondii (strain ATCC 6260 / CBS 566 / DSM 6381 / JCM 1539 / NBRC 10279 / NRRL Y-324) (Yeast) protein is Ribosome biogenesis protein ERB1.